A 145-amino-acid polypeptide reads, in one-letter code: Oocyte zinc finger protein XlCOF8.4I (145 aa).

The interval 1 to 25 (HKREADFCSKGNLTNPEISPVEHYP) is disordered. Residues 123-145 (LSCSECGKCFSTYHVLARHQKTH) form a C2H2-type zinc finger.

This sequence belongs to the krueppel C2H2-type zinc-finger protein family.

It localises to the nucleus. Its function is as follows. May be involved in transcriptional regulation. The chain is Oocyte zinc finger protein XlCOF8.4I from Xenopus laevis (African clawed frog).